We begin with the raw amino-acid sequence, 366 residues long: Anhydro-N-acetylmuramic acid kinase (366 aa).

Residue 12 to 19 (GTSLDGID) coordinates ATP.

Belongs to the anhydro-N-acetylmuramic acid kinase family.

It carries out the reaction 1,6-anhydro-N-acetyl-beta-muramate + ATP + H2O = N-acetyl-D-muramate 6-phosphate + ADP + H(+). Its pathway is amino-sugar metabolism; 1,6-anhydro-N-acetylmuramate degradation. It participates in cell wall biogenesis; peptidoglycan recycling. Its function is as follows. Catalyzes the specific phosphorylation of 1,6-anhydro-N-acetylmuramic acid (anhMurNAc) with the simultaneous cleavage of the 1,6-anhydro ring, generating MurNAc-6-P. Is required for the utilization of anhMurNAc either imported from the medium or derived from its own cell wall murein, and thus plays a role in cell wall recycling. The protein is Anhydro-N-acetylmuramic acid kinase of Nitrosospira multiformis (strain ATCC 25196 / NCIMB 11849 / C 71).